Reading from the N-terminus, the 117-residue chain is Large ribosomal subunit protein uL18 (117 aa).

This sequence belongs to the universal ribosomal protein uL18 family. In terms of assembly, part of the 50S ribosomal subunit; part of the 5S rRNA/L5/L18/L25 subcomplex. Contacts the 5S and 23S rRNAs.

Functionally, this is one of the proteins that bind and probably mediate the attachment of the 5S RNA into the large ribosomal subunit, where it forms part of the central protuberance. The sequence is that of Large ribosomal subunit protein uL18 from Leuconostoc citreum (strain KM20).